The following is a 520-amino-acid chain: Serine/threonine-protein kinases drp72 (520 aa).

Residues 20–281 enclose the Protein kinase domain; that stretch reads YTLQWIVGHG…NELARAVSAV (262 aa). Residues 26–34 and K49 each bind ATP; that span reads VGHGGMSTV. D148 (proton acceptor) is an active-site residue. Disordered regions lie at residues 315–334 and 366–504; these read ARPTTSVPASPTVLPERQEK and SGDS…DAAD. Positions 374-394 are enriched in low complexity; the sequence is TPETITQTVTPTETTTSEEPT. Over residues 395–411 the composition is skewed to pro residues; sequence LAPPPVQPTRQPVPTPD. Residues 416-429 show a composition bias toward polar residues; sequence RLPTTTQESPTRVS. Low complexity predominate over residues 440–449; that stretch reads EQTTPGGQPP. Residues 450-460 are compositionally biased toward polar residues; that stretch reads LSTLPTSLGWQ. A compositionally biased stretch (low complexity) spans 469–484; that stretch reads QGNPNTTGNPANPGTP. The span at 485–496 shows a compositional bias: gly residues; the sequence is GTTGGNGTGNAG.

This sequence belongs to the protein kinase superfamily. Ser/Thr protein kinase family.

The enzyme catalyses L-seryl-[protein] + ATP = O-phospho-L-seryl-[protein] + ADP + H(+). It carries out the reaction L-threonyl-[protein] + ATP = O-phospho-L-threonyl-[protein] + ADP + H(+). The chain is Serine/threonine-protein kinases drp72 from Corynebacterium efficiens (strain DSM 44549 / YS-314 / AJ 12310 / JCM 11189 / NBRC 100395).